The sequence spans 625 residues: Probable potassium transport system protein Kup 1 (625 aa).

12 helical membrane-spanning segments follow: residues 14 to 34 (LSLL…TSPL), 50 to 70 (AAAV…ITTV), 104 to 124 (IVAL…ITPA), 139 to 159 (PALQ…LFAI), 170 to 190 (LFGP…LVGI), 213 to 233 (GATG…AEAL), 249 to 269 (WFAV…ALVI), 287 to 307 (LLLP…QSVI), 339 to 359 (IYVG…TIGF), 368 to 388 (AYGI…FIAM), 396 to 416 (LLAA…FFLA), and 421 to 441 (IAEG…LMWI).

It belongs to the HAK/KUP transporter (TC 2.A.72) family.

It localises to the cell inner membrane. The catalysed reaction is K(+)(in) + H(+)(in) = K(+)(out) + H(+)(out). In terms of biological role, transport of potassium into the cell. Likely operates as a K(+):H(+) symporter. This Bradyrhizobium sp. (strain ORS 278) protein is Probable potassium transport system protein Kup 1.